The chain runs to 185 residues: Large ribosomal subunit protein uL5 (185 aa).

This sequence belongs to the universal ribosomal protein uL5 family. Part of the 50S ribosomal subunit; part of the 5S rRNA/L5/L18/L25 subcomplex. Contacts the 5S rRNA and the P site tRNA. Forms a bridge to the 30S subunit in the 70S ribosome.

In terms of biological role, this is one of the proteins that bind and probably mediate the attachment of the 5S RNA into the large ribosomal subunit, where it forms part of the central protuberance. In the 70S ribosome it contacts protein S13 of the 30S subunit (bridge B1b), connecting the 2 subunits; this bridge is implicated in subunit movement. Contacts the P site tRNA; the 5S rRNA and some of its associated proteins might help stabilize positioning of ribosome-bound tRNAs. The chain is Large ribosomal subunit protein uL5 from Streptomyces griseus subsp. griseus (strain JCM 4626 / CBS 651.72 / NBRC 13350 / KCC S-0626 / ISP 5235).